We begin with the raw amino-acid sequence, 163 residues long: UPF0262 protein RPC_4416 (163 aa).

This sequence belongs to the UPF0262 family.

In Rhodopseudomonas palustris (strain BisB18), this protein is UPF0262 protein RPC_4416.